We begin with the raw amino-acid sequence, 1188 residues long: AT-rich interactive domain-containing protein 5B (1188 aa).

K130 is covalently cross-linked (Glycyl lysine isopeptide (Lys-Gly) (interchain with G-Cter in SUMO2)). A disordered region spans residues 251–278; sequence RPRKKKTCPQRRDSFSGSKDPNNNCDGK. At S264 the chain carries Phosphoserine. Polar residues predominate over residues 265 to 275; sequence FSGSKDPNNNC. The region spanning 319 to 411 is the ARID domain; it reads RADEQAFLVA…LILPYERFIK (93 aa). K337 bears the N6,N6-dimethyllysine mark. A disordered region spans residues 413 to 614; the sequence is EEDKPLPPIK…LTSQNEAEEE (202 aa). Composition is skewed to basic and acidic residues over residues 445–459, 470–484, 493–504, and 526–535; these read IKQE…KENT, SEQR…HKSA, VKGKPEGHKDLG, and SEKEAEEMGD. Residue K446 forms a Glycyl lysine isopeptide (Lys-Gly) (interchain with G-Cter in SUMO2) linkage. Residues K494 and K496 each participate in a glycyl lysine isopeptide (Lys-Gly) (interchain with G-Cter in SUMO2) cross-link. Positions 594 to 609 are enriched in polar residues; that stretch reads PFSSFSATKPPLTSQN. Glycyl lysine isopeptide (Lys-Gly) (interchain with G-Cter in SUMO2) cross-links involve residues K767, K774, K803, K810, K893, K916, K920, and K935. The disordered stretch occupies residues 958 to 978; the sequence is SPMTMSGPKKYPESLARSGKP. Glycyl lysine isopeptide (Lys-Gly) (interchain with G-Cter in SUMO2) cross-links involve residues K988, K1000, and K1013. A disordered region spans residues 1030-1066; that stretch reads AVSPLDPAKEASGKEKASEQESEGNKGAYGGHSGAAS. S1032 is modified (phosphoserine). Basic and acidic residues predominate over residues 1036 to 1048; it reads PAKEASGKEKASE. Residues K1055 and K1070 each participate in a glycyl lysine isopeptide (Lys-Gly) (interchain with G-Cter in SUMO2) cross-link. At S1133 the chain carries Phosphoserine.

It belongs to the ARID5B family. Post-translationally, methylation at Lys-337 prevents DNA-binding. Demethylation by PHF2 promotes recruitment of the PHF2-ARID5B complex to promoters. Widely expressed. Expressed in lung, heart, small intestine, kidney, muscle and brain. Also expressed in spleen, thymus, endocrine organs and in uterus and testis.

It localises to the nucleus. Transcription coactivator that binds to the 5'-AATA[CT]-3' core sequence and plays a key role in adipogenesis and liver development. Acts by forming a complex with phosphorylated PHF2, which mediates demethylation at Lys-337, leading to target the PHF2-ARID5B complex to target promoters, where PHF2 mediates demethylation of dimethylated 'Lys-9' of histone H3 (H3K9me2), followed by transcription activation of target genes. The PHF2-ARID5B complex acts as a coactivator of HNF4A in liver. Required for adipogenesis: regulates triglyceride metabolism in adipocytes by regulating expression of adipogenic genes. Overexpression leads to induction of smooth muscle marker genes, suggesting that it may also act as a regulator of smooth muscle cell differentiation and proliferation. This chain is AT-rich interactive domain-containing protein 5B (Arid5b), found in Mus musculus (Mouse).